Reading from the N-terminus, the 205-residue chain is Probable GTP-binding protein EngB (205 aa).

The EngB-type G domain maps to 27 to 201 (EGMEIAFAGR…AAKLDSWFSS (175 aa)). GTP-binding positions include 35–42 (GRSNAGKS), 62–66 (GRTQL), 80–83 (DLPG), 147–150 (TKAD), and 180–182 (FSA). The Mg(2+) site is built by Ser-42 and Thr-64.

The protein belongs to the TRAFAC class TrmE-Era-EngA-EngB-Septin-like GTPase superfamily. EngB GTPase family. Mg(2+) is required as a cofactor.

Functionally, necessary for normal cell division and for the maintenance of normal septation. This is Probable GTP-binding protein EngB from Mannheimia succiniciproducens (strain KCTC 0769BP / MBEL55E).